The following is a 460-amino-acid chain: Kynureninase (460 aa).

Pyridoxal 5'-phosphate is bound by residues leucine 116, threonine 117, 144 to 147 (FPSD), serine 199, aspartate 228, histidine 231, and tyrosine 253. Residue lysine 254 is modified to N6-(pyridoxal phosphate)lysine. 2 residues coordinate pyridoxal 5'-phosphate: tryptophan 288 and asparagine 316.

This sequence belongs to the kynureninase family. As to quaternary structure, homodimer. The cofactor is pyridoxal 5'-phosphate.

It is found in the cytoplasm. It carries out the reaction L-kynurenine + H2O = anthranilate + L-alanine + H(+). The catalysed reaction is 3-hydroxy-L-kynurenine + H2O = 3-hydroxyanthranilate + L-alanine + H(+). It participates in amino-acid degradation; L-kynurenine degradation; L-alanine and anthranilate from L-kynurenine: step 1/1. It functions in the pathway cofactor biosynthesis; NAD(+) biosynthesis; quinolinate from L-kynurenine: step 2/3. Catalyzes the cleavage of L-kynurenine (L-Kyn) and L-3-hydroxykynurenine (L-3OHKyn) into anthranilic acid (AA) and 3-hydroxyanthranilic acid (3-OHAA), respectively. In Debaryomyces hansenii (strain ATCC 36239 / CBS 767 / BCRC 21394 / JCM 1990 / NBRC 0083 / IGC 2968) (Yeast), this protein is Kynureninase.